The following is a 137-amino-acid chain: Protein ApaG (137 aa).

The region spanning P2 to Q126 is the ApaG domain.

This Acidovorax sp. (strain JS42) protein is Protein ApaG.